We begin with the raw amino-acid sequence, 106 residues long: 3-phenylpropionate/cinnamic acid dioxygenase ferredoxin subunit (106 aa).

The 96-residue stretch at 4–99 (IYACPVADVP…VHVEGSDIFI (96 aa)) folds into the Rieske domain. [2Fe-2S] cluster is bound by residues Cys42, His44, Cys62, and His65.

Belongs to the bacterial ring-hydroxylating dioxygenase ferredoxin component family. In terms of assembly, this dioxygenase system consists of four proteins: the two subunits of the hydroxylase component (HcaE and HcaF), a ferredoxin (HcaC) and a ferredoxin reductase (HcaD). The cofactor is [2Fe-2S] cluster.

It functions in the pathway aromatic compound metabolism; 3-phenylpropanoate degradation. In terms of biological role, part of the multicomponent 3-phenylpropionate dioxygenase, that converts 3-phenylpropionic acid (PP) and cinnamic acid (CI) into 3-phenylpropionate-dihydrodiol (PP-dihydrodiol) and cinnamic acid-dihydrodiol (CI-dihydrodiol), respectively. This protein seems to be a 2Fe-2S ferredoxin. This Shigella boydii serotype 4 (strain Sb227) protein is 3-phenylpropionate/cinnamic acid dioxygenase ferredoxin subunit.